Here is a 61-residue protein sequence, read N- to C-terminus: ERMES regulator 1 (61 aa).

Residues 1–20 (MLPNLRRIFASFRTEEEERS) are Mitochondrial intermembrane-facing. The chain crosses the membrane as a helical span at residues 21 to 43 (YSRKAFFHLIGYITCSVLFSWLV). Residues 44-61 (RKKVISSPVVSSPIHALS) lie on the Cytoplasmic side of the membrane.

Belongs to the EMR1 family. Interacts with the ER-mitochondria encounter structure (ERMES) complex. Interacts with mdm12. Interacts with mdm34.

It is found in the mitochondrion outer membrane. Mediates the formation of endoplasmic reticulum (ER)-mitochondria encounter structure (ERMES) foci, thereby contributing to the formation of ER-mitochondrial contact sites. This chain is ERMES regulator 1, found in Schizosaccharomyces pombe (strain 972 / ATCC 24843) (Fission yeast).